Consider the following 361-residue polypeptide: Histidinol-phosphate aminotransferase (361 aa).

K219 is modified (N6-(pyridoxal phosphate)lysine).

The protein belongs to the class-II pyridoxal-phosphate-dependent aminotransferase family. Histidinol-phosphate aminotransferase subfamily. In terms of assembly, homodimer. Requires pyridoxal 5'-phosphate as cofactor.

It carries out the reaction L-histidinol phosphate + 2-oxoglutarate = 3-(imidazol-4-yl)-2-oxopropyl phosphate + L-glutamate. Its pathway is amino-acid biosynthesis; L-histidine biosynthesis; L-histidine from 5-phospho-alpha-D-ribose 1-diphosphate: step 7/9. This Cereibacter sphaeroides (strain KD131 / KCTC 12085) (Rhodobacter sphaeroides) protein is Histidinol-phosphate aminotransferase.